The primary structure comprises 286 residues: MQFFKTLAALVSCISFVLAYVAQDVHVSFPSTAGKSRVMIGKVEPRIGIDETVPTTITVEDPNEVIQVNFAIESTNKPFQNTLLIGLPNKNLEMAFEPEIKDNGKLSMYKYRIDLAKLDAALLQEASRSPEPIKATLILASSTAKPKENLFREILQLNLNFDVDHSDSSLVDKFGIKPEIHHIFHAEPKRVAKPIAVIFVLIIFITILSLIVTWLNSCAAAFNNIPTGVTAVYFLGFIATIVGFEVIFARYYLGTSIFETLFSSLYLGAPGLLTSTKFLRSFGQTI.

The N-terminal stretch at 1-19 is a signal peptide; that stretch reads MQFFKTLAALVSCISFVLA. Over 20–194 the chain is Lumenal; it reads YVAQDVHVSF…HAEPKRVAKP (175 aa). A helical membrane pass occupies residues 195–215; the sequence is IAVIFVLIIFITILSLIVTWL. The Cytoplasmic segment spans residues 216–228; it reads NSCAAAFNNIPTG. A helical membrane pass occupies residues 229–249; the sequence is VTAVYFLGFIATIVGFEVIFA. The Lumenal portion of the chain corresponds to 250–252; it reads RYY. A helical transmembrane segment spans residues 253–273; that stretch reads LGTSIFETLFSSLYLGAPGLL. Residues 274–286 are Cytoplasmic-facing; that stretch reads TSTKFLRSFGQTI.

The protein belongs to the SWP1 family. In terms of assembly, component of the oligosaccharyltransferase (OST) complex, which appears to exist in two assemblies comprising OST1, OST2, OST4, OST5, STT3, SWP1, WPB1, and either OST3 or OST6. OST assembly occurs through the formation of 3 subcomplexes. Subcomplex 1 contains OST1 and OST5, subcomplex 2 contains STT3, OST3, and OST4, and subcomplex 3 contains OST2, WBP1, and SWP1. Interacts with SEC61 and SSS1.

The protein localises to the endoplasmic reticulum membrane. The protein operates within protein modification; protein glycosylation. Subunit of the oligosaccharyl transferase (OST) complex that catalyzes the initial transfer of a defined glycan (Glc(3)Man(9)GlcNAc(2) in eukaryotes) from the lipid carrier dolichol-pyrophosphate to an asparagine residue within an Asn-X-Ser/Thr consensus motif in nascent polypeptide chains, the first step in protein N-glycosylation. N-glycosylation occurs cotranslationally and the complex associates with the Sec61 complex at the channel-forming translocon complex that mediates protein translocation across the endoplasmic reticulum (ER). All subunits are required for a maximal enzyme activity. This is Dolichyl-diphosphooligosaccharide--protein glycosyltransferase subunit SWP1 (SWP1) from Saccharomyces cerevisiae (strain ATCC 204508 / S288c) (Baker's yeast).